The primary structure comprises 334 residues: MLNVLIVGASGYSGAELVNYINRHMFSKIKKIFVSENSSHIGKLFSELHQEFKNIIDLPFEAINYDTLIEKDIDAVFLATDHHVSYSLVPFFLSLNCVVFDLSGAYRVKNTDTYLKYYGFSHQHQDILKRSVYGLAEWNKQEIKKAELIAVPGCYATCIQLALKPLIKENFLNDEFIPIINAISGVSGAGRKANITNSFCEVSLHPYNVFTHRHTPEIIEHLGIPVIFIPHLGSFSRGILASITCKLKCNFTFQDIYNLYNTVYKEKPLIRVYEKNFPSIKAVVKLPFCDIGFIIQDKYIVIIAAEDNLLKGAAAQAIQCFNIRFGFSEIESII.

Cys154 is an active-site residue.

This sequence belongs to the NAGSA dehydrogenase family. Type 1 subfamily.

The protein resides in the cytoplasm. The enzyme catalyses N-acetyl-L-glutamate 5-semialdehyde + phosphate + NADP(+) = N-acetyl-L-glutamyl 5-phosphate + NADPH + H(+). It functions in the pathway amino-acid biosynthesis; L-arginine biosynthesis; N(2)-acetyl-L-ornithine from L-glutamate: step 3/4. Its function is as follows. Catalyzes the NADPH-dependent reduction of N-acetyl-5-glutamyl phosphate to yield N-acetyl-L-glutamate 5-semialdehyde. This Buchnera aphidicola subsp. Schizaphis graminum (strain Sg) protein is N-acetyl-gamma-glutamyl-phosphate reductase.